The following is a 359-amino-acid chain: DNA-directed RNA polymerase subunit alpha (359 aa).

Residues 1–226 (MLISQRPSLA…ELFGLARELN (226 aa)) form an alpha N-terminal domain (alpha-NTD) region. Residues 241–359 (ADTIAAYAMP…GQDYAETEQL (119 aa)) are alpha C-terminal domain (alpha-CTD). Residues 315 to 359 (FDPSAAAAEYPSEGWASETETVGGLGRVEDNGYDDGQDYAETEQL) are disordered. Residues 345-359 (NGYDDGQDYAETEQL) are compositionally biased toward acidic residues.

The protein belongs to the RNA polymerase alpha chain family. As to quaternary structure, homodimer. The RNAP catalytic core consists of 2 alpha, 1 beta, 1 beta' and 1 omega subunit. When a sigma factor is associated with the core the holoenzyme is formed, which can initiate transcription.

The catalysed reaction is RNA(n) + a ribonucleoside 5'-triphosphate = RNA(n+1) + diphosphate. Its function is as follows. DNA-dependent RNA polymerase catalyzes the transcription of DNA into RNA using the four ribonucleoside triphosphates as substrates. The protein is DNA-directed RNA polymerase subunit alpha of Saccharopolyspora erythraea (strain ATCC 11635 / DSM 40517 / JCM 4748 / NBRC 13426 / NCIMB 8594 / NRRL 2338).